A 415-amino-acid polypeptide reads, in one-letter code: 6-phospho-beta-glucosidase BglT (415 aa).

NAD(+) is bound at residue 1–64 (MRIAVIGGGS…DRFKVLISDT (64 aa)). Substrate-binding residues include Arg87 and Asn140. Cys162 serves as a coordination point for Mn(2+). A substrate-binding site is contributed by Asn163. His192 contributes to the Mn(2+) binding site. Tyr241 (proton acceptor) is an active-site residue. A substrate-binding site is contributed by Arg261.

Belongs to the glycosyl hydrolase 4 family. As to quaternary structure, homodimer or homotetramer. Exists in a homodimer/homotetramer equilibrium state in solution. Requires NAD(+) as cofactor. The cofactor is Mn(2+).

The catalysed reaction is 6-phospho-beta-D-glucosyl-(1-&gt;4)-D-glucose + H2O = D-glucose 6-phosphate + D-glucose. Hydrolyzes cellobiose 6'-phosphate into glucose 6-phosphate (Glc6P) and glucose. The sequence is that of 6-phospho-beta-glucosidase BglT (bglT) from Thermotoga maritima (strain ATCC 43589 / DSM 3109 / JCM 10099 / NBRC 100826 / MSB8).